The sequence spans 612 residues: Indole-3-acetic acid-amido synthetase GH3.5 (612 aa).

This sequence belongs to the IAA-amido conjugating enzyme family.

Functionally, catalyzes the synthesis of indole-3-acetic acid (IAA)-amino acid conjugates, providing a mechanism for the plant to cope with the presence of excess auxin. Strongly reactive with Glu, Gln, Trp, Asp, Ala, Leu, Phe, Gly, Tyr, Met, Ile and Val. Little or no product formation with His, Ser, Thr, Arg, Lys, or Cys. Also active on pyruvic and butyric acid analogs of IAA, PAA and the synthetic auxin naphthaleneacetic acid (NAA). The two chlorinated synthetic auxin herbicides 2,4-D and 3,6-dichloro-o-anisic acid (dicamba) cannot be used as substrates. The sequence is that of Indole-3-acetic acid-amido synthetase GH3.5 (GH3.5) from Arabidopsis thaliana (Mouse-ear cress).